Here is a 156-residue protein sequence, read N- to C-terminus: Peroxisomal membrane associated protein 20 (156 aa).

A Thioredoxin domain is found at 2-156 (VAVGSTLPKV…SSADKVLSSL (155 aa)). The Cysteine sulfenic acid (-SOH) intermediate role is filled by C43.

Belongs to the peroxiredoxin family. Prx5 subfamily. In terms of assembly, homodimer; disulfide-linked, upon oxidation.

It is found in the cytoplasm. The protein localises to the nucleus. Its function is as follows. May act as a chaperone rather than a peroxidase. Has no thioredoxin-dependent peroxidase activity. Shows weak chaperone activity. In Schizosaccharomyces pombe (strain 972 / ATCC 24843) (Fission yeast), this protein is Peroxisomal membrane associated protein 20.